We begin with the raw amino-acid sequence, 464 residues long: Purple acid phosphatase (464 aa).

An N-terminal signal peptide occupies residues 1-30 (MGVVEGLLALALVLSACVMCNGGSSSPFIR). N-linked (GlcNAc...) asparagine glycosylation is found at Asn108 and Asn136. Position 162 (Asp162) interacts with Fe cation. N-linked (GlcNAc...) asparagine glycosylation is present at Asn170. Fe cation is bound by residues Asp191 and Tyr194. Asp191 provides a ligand contact to Zn(2+). Asn228 serves as a coordination point for Zn(2+). Position 228 (Asn228) interacts with substrate. Residue Asn301 is glycosylated (N-linked (GlcNAc...) asparagine). Residue His313 participates in Zn(2+) binding. His323 (proton donor) is an active-site residue. His350 contributes to the Zn(2+) binding site. 350 to 352 (HVH) serves as a coordination point for substrate. A Fe cation-binding site is contributed by His352. N-linked (GlcNAc...) asparagine glycosylation is found at Asn398 and Asn423.

Belongs to the metallophosphoesterase superfamily. Purple acid phosphatase family. Homodimer; disulfide-linked. Fe cation serves as cofactor. Zn(2+) is required as a cofactor. It depends on Mn(2+) as a cofactor. Requires Cu(2+) as cofactor. The cofactor is Mg(2+).

It is found in the secreted. It catalyses the reaction a phosphate monoester + H2O = an alcohol + phosphate. The polypeptide is Purple acid phosphatase (Glycine max (Soybean)).